Reading from the N-terminus, the 309-residue chain is Tyrosine recombinase XerD (309 aa).

The Core-binding (CB) domain maps to Met3 to Tyr88. Residues Pro109–Ser302 form the Tyr recombinase domain. Active-site residues include Arg158, Lys182, His254, Arg257, and His280. Tyr289 (O-(3'-phospho-DNA)-tyrosine intermediate) is an active-site residue.

It belongs to the 'phage' integrase family. XerD subfamily. Forms a cyclic heterotetrameric complex composed of two molecules of XerC and two molecules of XerD.

It localises to the cytoplasm. In terms of biological role, site-specific tyrosine recombinase, which acts by catalyzing the cutting and rejoining of the recombining DNA molecules. The XerC-XerD complex is essential to convert dimers of the bacterial chromosome into monomers to permit their segregation at cell division. It also contributes to the segregational stability of plasmids. The sequence is that of Tyrosine recombinase XerD from Brucella suis biovar 1 (strain 1330).